Here is a 489-residue protein sequence, read N- to C-terminus: Protein K15 (489 aa).

Residues 1–26 form the signal peptide; that stretch reads MKTLIFFWNLWLWALLVCFWCITLVC. 11 helical membrane passes run 29-49, 63-83, 89-109, 121-141, 148-168, 175-195, 200-220, 237-257, 264-284, 296-316, and 324-344; these read TNSI…VSAI, WPSS…WNLS, TYAC…LTLI, HGIL…VHMS, WIFF…FATV, LVSS…VSCC, CTAT…TGII, FLLL…LLAI, IKGH…LYVW, MLHL…VMLL, and ILTM…LLVF.

Interacts with host LYN; this interaction modulates B-cells signaling. Interacts with host ITSN2.

The protein resides in the host cell membrane. It localises to the host Golgi apparatus. The protein localises to the host trans-Golgi network. Functionally, plays a crucial role for reactivation of the virus from latency, early viral gene expression and virus production. Modulates host signaling pathways including activation of MAP kinases c-JUN-N-terminal kinase (JNK), ERK2, and NF-kappa-B resulting in the activation of AP-1 and NFAT-dependent gene expression in B-lymphocytes. When expressed in epithelial cells, induces the expression of several inflammatory and angiogenic genes. Also interferes with B-lymphocytes signaling through interaction with host LYN kinase. The polypeptide is Protein K15 (K15) (Human herpesvirus 8 type P (isolate GK18) (HHV-8)).